Consider the following 77-residue polypeptide: uncharacterized protein (77 aa).

Residues Met-1–Lys-15 show a composition bias toward polar residues. Disordered stretches follow at residues Met-1–Trp-20 and Thr-31–Phe-52. Positions Ser-33 to Asp-44 are enriched in acidic residues.

This is an uncharacterized protein from Schizosaccharomyces pombe (strain 972 / ATCC 24843) (Fission yeast).